Here is a 666-residue protein sequence, read N- to C-terminus: DNA mismatch repair protein MutL (666 aa).

Belongs to the DNA mismatch repair MutL/HexB family.

Functionally, this protein is involved in the repair of mismatches in DNA. It is required for dam-dependent methyl-directed DNA mismatch repair. May act as a 'molecular matchmaker', a protein that promotes the formation of a stable complex between two or more DNA-binding proteins in an ATP-dependent manner without itself being part of a final effector complex. This is DNA mismatch repair protein MutL from Clostridium botulinum (strain Loch Maree / Type A3).